Consider the following 429-residue polypeptide: Putative GMP synthase [glutamine-hydrolyzing] (429 aa).

One can recognise a Glutamine amidotransferase type-1 domain in the interval 10-118 (TIFILDFGSQ…GYTPIHLYPC (109 aa)). Cys87 serves as the catalytic Nucleophile. The 186-residue stretch at 119-304 (ELFKHIVDCE…LGLSSYLLDR (186 aa)) folds into the GMPS ATP-PPase domain. Residues His176 and Glu178 contribute to the active site.

In terms of assembly, homodimer.

It catalyses the reaction XMP + L-glutamine + ATP + H2O = GMP + L-glutamate + AMP + diphosphate + 2 H(+). It functions in the pathway purine metabolism; GMP biosynthesis; GMP from XMP (L-Gln route): step 1/1. Catalyzes the synthesis of GMP from XMP. This Chlamydia pneumoniae (Chlamydophila pneumoniae) protein is Putative GMP synthase [glutamine-hydrolyzing] (guaA).